The following is a 58-amino-acid chain: Small ribosomal subunit protein bS21 (58 aa).

Belongs to the bacterial ribosomal protein bS21 family.

This Prochlorococcus marinus (strain MIT 9515) protein is Small ribosomal subunit protein bS21.